The following is an 897-amino-acid chain: Patched domain-containing protein 1 (897 aa).

Residues 25 to 45 traverse the membrane as a helical segment; the sequence is PVFFLTVPAVLTIIFGSTVLS. N-linked (GlcNAc...) asparagine glycans are attached at residues N132, N167, and N179. 2 helical membrane-spanning segments follow: residues 271-291 and 306-326; these read GVLA…AATI and GLLG…IFFI. The SSD domain maps to 273–433; it reads LAKSEVLVSL…FSFYGSCLVF (161 aa). N332 is a glycosylation site (N-linked (GlcNAc...) asparagine). 4 helical membrane-spanning segments follow: residues 335 to 355, 377 to 397, 414 to 434, and 506 to 526; these read LLGI…ELLA, VMVC…MGAS, VAVL…LVFA, and PFVV…CLQI. Residues N572 and N603 are each glycosylated (N-linked (GlcNAc...) asparagine). 3 consecutive transmembrane segments (helical) span residues 701–721, 727–747, and 754–774; these read PILT…FLVI, FWLI…MTLW, and ISIL…APHL. N-linked (GlcNAc...) asparagine glycosylation is present at N803. A run of 2 helical transmembrane segments spans residues 806–826 and 831–851; these read CFVI…YTLF and LTAG…LTFF. Over residues 856–866 the composition is skewed to basic residues; it reads KRHKKKKRAKR. The tract at residues 856–881 is disordered; that stretch reads KRHKKKKRAKRKEREREREREREREE. Residues 867-881 show a composition bias toward basic and acidic residues; it reads KEREREREREREREE.

This sequence belongs to the patched family.

It is found in the cell membrane. Its subcellular location is the cell projection. The protein resides in the dendritic spine. Its function is as follows. Can bind cholesterol in vitro. The polypeptide is Patched domain-containing protein 1 (ptchd1) (Danio rerio (Zebrafish)).